The sequence spans 680 residues: DNA ligase (680 aa).

NAD(+)-binding positions include 44–48, 93–94, and E125; these read DHVYD and SM. The N6-AMP-lysine intermediate role is filled by K127. 4 residues coordinate NAD(+): R148, E182, K298, and K322. Residues C416, C419, C434, and C439 each contribute to the Zn(2+) site. The BRCT domain maps to 600 to 680; it reads NPDSEWNGRR…QFSQAMKEEQ (81 aa).

This sequence belongs to the NAD-dependent DNA ligase family. LigA subfamily. Requires Mg(2+) as cofactor. Mn(2+) is required as a cofactor.

It carries out the reaction NAD(+) + (deoxyribonucleotide)n-3'-hydroxyl + 5'-phospho-(deoxyribonucleotide)m = (deoxyribonucleotide)n+m + AMP + beta-nicotinamide D-nucleotide.. DNA ligase that catalyzes the formation of phosphodiester linkages between 5'-phosphoryl and 3'-hydroxyl groups in double-stranded DNA using NAD as a coenzyme and as the energy source for the reaction. It is essential for DNA replication and repair of damaged DNA. The protein is DNA ligase of Limosilactobacillus reuteri (strain DSM 20016) (Lactobacillus reuteri).